Reading from the N-terminus, the 236-residue chain is Carboxymethylenebutenolidase (236 aa).

Active-site residues include Cys123, Asp171, and His202.

Belongs to the dienelactone hydrolase family. Monomer.

It carries out the reaction 2-(5-oxo-2,5-dihydrofuran-2-ylidene)acetate + H2O = 4-oxohex-2-enedioate + H(+). It participates in aromatic compound metabolism; 3-chlorocatechol degradation. Its function is as follows. Ring cleavage of cyclic ester dienelactone to produce maleylacetate. This Pseudomonas knackmussii (strain DSM 6978 / CCUG 54928 / LMG 23759 / B13) protein is Carboxymethylenebutenolidase (clcD).